Reading from the N-terminus, the 1190-residue chain is Pumilio homolog 1 (1190 aa).

Disordered stretches follow at residues 38–74, 491–531, 611–675, and 744–777; these read LTSGPVGQQQPPQPPTHSALATGPHASPVGGSMGVAG, SNSA…QQTD, ANGP…NSSL, and GPVGMPLPSQGPSHSQTPPPSLSSHGSSTSLNLG. Low complexity-rich tracts occupy residues 491–508, 518–531, 628–675, and 765–777; these read SNSASQQNNPQSQQGQQQ, PLTPNQNQQGQQTD, QQPQ…NSSL, and LSSHGSSTSLNLG. In terms of domain architecture, PUM-HD spans 830–1172; sequence GRSRLLEDFR…HILAKLEKYY (343 aa). Pumilio repeat units lie at residues 850–885, 886–921, 922–959, 960–995, 996–1031, 1032–1067, 1068–1103, and 1107–1146; these read EIAGHIMEFSQDQHGSRFIQLKLERATPAERQLVFN, EILQAAYQLMVDVFGNYVIQKFFEFGSLEQKLALAE, RIRGHVLSLALQMYGCRVIQKALEFIPPDQQVINEMVR, ELDGHVLKCVKDQNGNHVVQKCIECVQPQSLQFIID, AFKSQVFALSTHPYGCRVIQRILEHCLPEQTLPILE, ELHQHTEQLVQDQYGNYVIQHVLEHGRPEDKSKIVA, EIRGNVLVLSQHKFASNVVEKCVTHASRTERAMLID, and TMNDGPHSALYTMMKDQYANYVVQKMIDVAEPAQRKIVMH. The tract at residues 865–869 is adenine-nucleotide binding in RNA target; sequence SRFIQ. Residues 901-905 are uracil-nucleotide binding in RNA target; the sequence is NYVIQ. Residues 937-941 are adenine-nucleotide binding in RNA target; that stretch reads CRVIQ. Positions 975 to 979 are non-specific-nucleotide binding in RNA target; sequence NHVVQ. Positions 1011 to 1015 are adenine-nucleotide binding in RNA target; that stretch reads CRVIQ. The uracil-nucleotide binding in RNA target stretch occupies residues 1047–1051; the sequence is NYVIQ. The tract at residues 1083-1087 is guanine-nucleotide binding in RNA target; that stretch reads SNVVE. A uracil-nucleotide binding in RNA target region spans residues 1126-1130; the sequence is NYVVQ.

Interacts with cpeb1-a; interacts with unphosphorylated cpeb1-a but not phosphorylated. Component of a complex with papd4, sympk, tacc3, parn, dazl and cpeb1. Post-translationally, phosphorylated. Phosphorylation takes place at the time of dissociation of cpeb1-a from pum1 and the translational activation of ccnb1 mRNA. In terms of tissue distribution, present in oocytes (at protein level).

Its subcellular location is the cytoplasm. It localises to the P-body. It is found in the cytoplasmic granule. In terms of biological role, sequence-specific RNA-binding protein that acts as a post-transcriptional repressor by binding the 3'-UTR of mRNA targets. Binds to an RNA consensus sequence, the Pumilio Response Element (PRE), 5'-UGUANAUA-3', that is related to the Nanos Response Element (NRE). Mediates post-transcriptional repression of transcripts via different mechanisms: acts via direct recruitment of deadenylase complexes leading to translational inhibition and mRNA degradation. Also mediates deadenylation-independent repression by promoting accessibility of miRNAs. Acts as a post-transcriptional repressor of ccnb1 mRNA during oocyte maturation. The chain is Pumilio homolog 1 from Xenopus laevis (African clawed frog).